The chain runs to 280 residues: Pantothenate synthetase (280 aa).

Residue 30–37 (MGYLHEGH) coordinates ATP. His37 acts as the Proton donor in catalysis. Residue Gln61 coordinates (R)-pantoate. A beta-alanine-binding site is contributed by Gln61. Residue 147 to 150 (GQKD) participates in ATP binding. Gln153 is a (R)-pantoate binding site. ATP is bound by residues Val176 and 184-187 (MSSR).

This sequence belongs to the pantothenate synthetase family. In terms of assembly, homodimer.

The protein localises to the cytoplasm. The catalysed reaction is (R)-pantoate + beta-alanine + ATP = (R)-pantothenate + AMP + diphosphate + H(+). Its pathway is cofactor biosynthesis; (R)-pantothenate biosynthesis; (R)-pantothenate from (R)-pantoate and beta-alanine: step 1/1. Functionally, catalyzes the condensation of pantoate with beta-alanine in an ATP-dependent reaction via a pantoyl-adenylate intermediate. In Thermotoga petrophila (strain ATCC BAA-488 / DSM 13995 / JCM 10881 / RKU-1), this protein is Pantothenate synthetase.